Consider the following 300-residue polypeptide: Cathepsin B-like CP2 (300 aa).

The first 19 residues, M1–S19, serve as a signal peptide directing secretion. 3 disulfide bridges follow: C88–C115, C98–C141, and C134–C177. C101 is an active-site residue. Catalysis depends on residues H245 and N266.

Belongs to the peptidase C1 family.

The protein resides in the vacuole. Thiol protease which is required for parasite excystation and invasion of the proximal small intestine of the human host. This Giardia intestinalis (Giardia lamblia) protein is Cathepsin B-like CP2 (CP2).